A 156-amino-acid chain; its full sequence is Small ribosomal subunit protein uS7 (156 aa).

It belongs to the universal ribosomal protein uS7 family. As to quaternary structure, part of the 30S ribosomal subunit. Contacts proteins S9 and S11.

One of the primary rRNA binding proteins, it binds directly to 16S rRNA where it nucleates assembly of the head domain of the 30S subunit. Is located at the subunit interface close to the decoding center, probably blocks exit of the E-site tRNA. In Geotalea daltonii (strain DSM 22248 / JCM 15807 / FRC-32) (Geobacter daltonii), this protein is Small ribosomal subunit protein uS7.